The chain runs to 125 residues: Synaptobrevin (125 aa).

Residues 1-46 (MSGPQNPQAGPGGPPSGPPQPGGPPGPPQGPPQPVQQSKRLQQTQA) form a disordered region. Topologically, residues 1 to 103 (MSGPQNPQAG…KRKFWWKNCK (103 aa)) are cytoplasmic. Pro residues predominate over residues 12–34 (GGPPSGPPQPGGPPGPPQGPPQP). The 61-residue stretch at 40-100 (RLQQTQAQVE…GKLKRKFWWK (61 aa)) folds into the v-SNARE coiled-coil homology domain. Residues 104–123 (MMIILGGIVAVIVTVIIVWA) traverse the membrane as a helical; Anchor for type IV membrane protein segment. The Vesicular segment spans residues 124-125 (AT).

This sequence belongs to the synaptobrevin family.

The protein resides in the cytoplasmic vesicle. The protein localises to the secretory vesicle. It localises to the synaptic vesicle membrane. It is found in the synapse. Its subcellular location is the synaptosome. Its function is as follows. Intrinsic membrane protein of small synaptic vesicles. This is Synaptobrevin from Doryteuthis pealeii (Longfin inshore squid).